Consider the following 493-residue polypeptide: Glutamyl-tRNA(Gln) amidotransferase subunit A (493 aa).

Catalysis depends on charge relay system residues lysine 78 and serine 158. The Acyl-ester intermediate role is filled by serine 182.

This sequence belongs to the amidase family. GatA subfamily. In terms of assembly, heterotrimer of A, B and C subunits.

It carries out the reaction L-glutamyl-tRNA(Gln) + L-glutamine + ATP + H2O = L-glutaminyl-tRNA(Gln) + L-glutamate + ADP + phosphate + H(+). Allows the formation of correctly charged Gln-tRNA(Gln) through the transamidation of misacylated Glu-tRNA(Gln) in organisms which lack glutaminyl-tRNA synthetase. The reaction takes place in the presence of glutamine and ATP through an activated gamma-phospho-Glu-tRNA(Gln). This is Glutamyl-tRNA(Gln) amidotransferase subunit A from Rickettsia bellii (strain OSU 85-389).